The chain runs to 546 residues: MKNQDKKNGAAKQSNPKSSPGQPEAGPEGAQERPSQAAPAVEAEGPGSSQAPRKPEGAQARTAQSGALRDVSEELSRQLEDILSTYCVDNNQGGPGEDGAQGEPAEPEDAEKSRTYVARNGEPEPTPVVNGEKEPSKGDPNTEEIRQSDEVGDRDHRRPQEKKKAKGLGKEITLLMQTLNTLSTPEEKLAALCKKYAELLEEHRNSQKQMKLLQKKQSQLVQEKDHLRGEHSKAVLARSKLESLCRELQRHNRSLKEEGVQRAREEEEKRKEVTSHFQVTLNDIQLQMEQHNERNSKLRQENMELAERLKKLIEQYELREEHIDKVFKHKDLQQQLVDAKLQQAQEMLKEAEERHQREKDFLLKEAVESQRMCELMKQQETHLKQQLALYTEKFEEFQNTLSKSSEVFTTFKQEMEKMTKKIKKLEKETTMYRSRWESSNKALLEMAEEKTVRDKELEGLQVKIQRLEKLCRALQTERNDLNKRVQDLSAGGQGSLTDSGPERRPEGPGAQAPSSPRVTEAPCYPGAPSTEASGQTGPQEPTSARA.

Disordered regions lie at residues 1 to 170 (MKNQ…GLGK) and 482 to 546 (NKRV…SARA). A compositionally biased stretch (polar residues) spans 11 to 21 (AKQSNPKSSPG). Basic and acidic residues-rich tracts occupy residues 70–80 (DVSEELSRQLE) and 143–158 (EEIRQSDEVGDRDHRR). Serine 72 is subject to Phosphoserine. Positions 186–491 (EEKLAALCKK…NKRVQDLSAG (306 aa)) form a coiled coil. The residue at position 515 (serine 515) is a Phosphoserine. Residues 530-546 (TEASGQTGPQEPTSARA) are compositionally biased toward polar residues.

This sequence belongs to the taxilin family. As to quaternary structure, binds to the C-terminal coiled coil region of syntaxin family members STX1A, STX3A and STX4A, but not when these proteins are complexed with SNAP25, VAMP2 or STXBP1, suggesting that it interacts with syntaxins that do not form the SNARE complex. As to expression, ubiquitous, with much higher expression in heart, kidney, liver and pancreas.

Functionally, may be involved in intracellular vesicle traffic and potentially in calcium-dependent exocytosis in neuroendocrine cells. This Homo sapiens (Human) protein is Alpha-taxilin (TXLNA).